A 186-amino-acid chain; its full sequence is Threonylcarbamoyl-AMP synthase (186 aa).

Residues 5-186 form the YrdC-like domain; that stretch reads TQSINDAVKC…DAITGEILRL (182 aa).

This sequence belongs to the SUA5 family. TsaC subfamily.

It localises to the cytoplasm. It carries out the reaction L-threonine + hydrogencarbonate + ATP = L-threonylcarbamoyladenylate + diphosphate + H2O. In terms of biological role, required for the formation of a threonylcarbamoyl group on adenosine at position 37 (t(6)A37) in tRNAs that read codons beginning with adenine. Catalyzes the conversion of L-threonine, HCO(3)(-)/CO(2) and ATP to give threonylcarbamoyl-AMP (TC-AMP) as the acyladenylate intermediate, with the release of diphosphate. The sequence is that of Threonylcarbamoyl-AMP synthase from Coxiella burnetii (strain RSA 331 / Henzerling II).